An 83-amino-acid polypeptide reads, in one-letter code: Cytochrome b559 subunit alpha (83 aa).

A helical membrane pass occupies residues 21–35 (VIHSITIPSLFIAGW). His-23 contributes to the heme binding site.

Belongs to the PsbE/PsbF family. Heterodimer of an alpha subunit and a beta subunit. PSII is composed of 1 copy each of membrane proteins PsbA, PsbB, PsbC, PsbD, PsbE, PsbF, PsbH, PsbI, PsbJ, PsbK, PsbL, PsbM, PsbT, PsbX, PsbY, PsbZ, Psb30/Ycf12, at least 3 peripheral proteins of the oxygen-evolving complex and a large number of cofactors. It forms dimeric complexes. Heme b serves as cofactor.

Its subcellular location is the plastid. It localises to the chloroplast thylakoid membrane. Its function is as follows. This b-type cytochrome is tightly associated with the reaction center of photosystem II (PSII). PSII is a light-driven water:plastoquinone oxidoreductase that uses light energy to abstract electrons from H(2)O, generating O(2) and a proton gradient subsequently used for ATP formation. It consists of a core antenna complex that captures photons, and an electron transfer chain that converts photonic excitation into a charge separation. The polypeptide is Cytochrome b559 subunit alpha (Citrus sinensis (Sweet orange)).